Here is a 312-residue protein sequence, read N- to C-terminus: Cytoplasmic dynein intermediate light chain DYN3 (312 aa).

Belongs to the dynein light intermediate chain DYN3 family. As to quaternary structure, the dynein complex consists of at least two heavy chains and a number of intermediate and light chains. Interacts with DYN1.

It is found in the cytoplasm. The protein localises to the cytoskeleton. Its function is as follows. Component of the cytoplasmic dynein which acts as a motor for the intracellular retrograde motility of vesicles and organelles along microtubules. May play an important role in the proper orientation of the mitotic spindle into the budding daughter cell yeast. Probably required for normal progression of the cell cycle. The polypeptide is Cytoplasmic dynein intermediate light chain DYN3 (DYN3) (Saccharomyces cerevisiae (strain ATCC 204508 / S288c) (Baker's yeast)).